Reading from the N-terminus, the 175-residue chain is Apoptosis regulator Bcl-2 homolog (175 aa).

Residues lysine 37–glycine 42 form a mediates interaction with human NOP53 and localization to host nucleolus region. The chain crosses the membrane as a helical span at residues methionine 153–serine 173.

Belongs to the Bcl-2 family. Interacts with human NOP53; may sequester ORF16 in host nucleolus and reduce its antiapoptotic activity. Interacts with ORF55.

It is found in the host membrane. The protein localises to the host mitochondrion. Its subcellular location is the host nucleus. The protein resides in the host nucleolus. In terms of biological role, plays a role in the protection against apoptosis mediated by cytotoxic cells during the immune response to acute and persistent viral infection. Contributes therefore to latency establishment. Also plays a role in the inhibition of host starvation-induced autophagy which ultimately contributes to the viral chronic infection. Also participates in the viral genome replication within host nucleus. This is Apoptosis regulator Bcl-2 homolog (vBCL2) from Homo sapiens (Human).